We begin with the raw amino-acid sequence, 41 residues long: Hadrurin (41 aa).

The protein belongs to the non-disulfide-bridged peptide (NDBP) superfamily. Long chain multifunctional peptide (group 2) family. As to expression, expressed by the venom gland.

Its subcellular location is the secreted. In terms of biological role, antimicrobial activity against S.typhimurium, K.pneumoniae, E.cloacae, P.aeruginosa, E.coli and S.marcescens. Also shows hemolytic activity when tested in human erythrocytes. This is Hadrurin from Hoffmannihadrurus aztecus (Mexican scorpion).